A 93-amino-acid polypeptide reads, in one-letter code: Small ribosomal subunit protein uS19 (93 aa).

The protein belongs to the universal ribosomal protein uS19 family.

In terms of biological role, protein S19 forms a complex with S13 that binds strongly to the 16S ribosomal RNA. This Salinispora tropica (strain ATCC BAA-916 / DSM 44818 / JCM 13857 / NBRC 105044 / CNB-440) protein is Small ribosomal subunit protein uS19.